The chain runs to 329 residues: UDP-glucose 4-epimerase (329 aa).

NAD(+)-binding positions include 13–14 (YV), 33–38 (HNLSTG), 53–54 (DI), 76–80 (FAAFS), asparagine 95, threonine 120, tyrosine 144, lysine 148, and phenylalanine 172. Substrate contacts are provided by threonine 120 and tyrosine 144. Tyrosine 144 functions as the Proton acceptor in the catalytic mechanism. Substrate is bound by residues asparagine 173, 190–191 (HL), 207–209 (SVY), arginine 221, and 281–284 (RGRD).

The protein belongs to the NAD(P)-dependent epimerase/dehydratase family. Homodimer. NAD(+) serves as cofactor.

The enzyme catalyses UDP-alpha-D-glucose = UDP-alpha-D-galactose. It functions in the pathway carbohydrate metabolism; galactose metabolism. Its function is as follows. Involved in the metabolism of galactose. Catalyzes the conversion of UDP-galactose (UDP-Gal) to UDP-glucose (UDP-Glc) through a mechanism involving the transient reduction of NAD. This is UDP-glucose 4-epimerase (galE) from Streptomyces lividans.